A 402-amino-acid chain; its full sequence is Protein RETARDED ROOT GROWTH-LIKE (402 aa).

A helical transmembrane segment spans residues 375–395; that stretch reads SATLEWLIIILISMEIAISFY.

It belongs to the RMD1/sif2 family. In terms of tissue distribution, highly expressed in germinating seeds and developing seedlings. Also present at low levels in seedlings, roots, leaves, stems and flowers, and barely in siliques.

It is found in the mitochondrion membrane. The protein localises to the mitochondrion. Functionally, mediates abscisic acid (ABA) signal transduction through mitochondrial retrograde regulation involving ABI4 during seed germination and seedling growth, and leading to the production of reactive oxygen species (ROS) by the alternative respiratory pathway. Required for the maintenance of mitochondrial structure. The polypeptide is Protein RETARDED ROOT GROWTH-LIKE (Arabidopsis thaliana (Mouse-ear cress)).